We begin with the raw amino-acid sequence, 34 residues long: GCANAYKSCNGPHTCCWGYNGYKKACICSGXNWK.

3 disulfide bridges follow: Cys2–Cys16, Cys9–Cys26, and Cys15–Cys28.

It belongs to the neurotoxin 02 (plectoxin) family. 01 (Tx3) subfamily. Expressed by the venom gland.

It is found in the secreted. Its function is as follows. Inhibits all known high-voltage activated calcium channels (L-, P/Q- and R-type currents) (Cav), and most effectively the P/Q- (Cav2.1/CACNA1A) and R-type (Cav2.3/CACNA1E) currents. In rat brain, inhibits glutamate release, neuronal death and loss of neurotransmission in the hippocampus resulting from ischemia. In vivo, induces rapid general flaccid paralysis followed by death in 10-30 minutes at dose levels of 5 ug per mouse. The chain is Omega-ctenitoxin-Pn2a from Phoneutria nigriventer (Brazilian armed spider).